The primary structure comprises 255 residues: 5-oxoprolinase subunit A (255 aa).

The protein belongs to the LamB/PxpA family. As to quaternary structure, forms a complex composed of PxpA, PxpB and PxpC.

It catalyses the reaction 5-oxo-L-proline + ATP + 2 H2O = L-glutamate + ADP + phosphate + H(+). Its function is as follows. Catalyzes the cleavage of 5-oxoproline to form L-glutamate coupled to the hydrolysis of ATP to ADP and inorganic phosphate. The polypeptide is 5-oxoprolinase subunit A (Rhodopseudomonas palustris (strain BisA53)).